The primary structure comprises 530 residues: PC4 and SFRS1-interacting protein (530 aa).

Residues 1 to 64 (MTRDFKPGDL…PKDIFPYSEN (64 aa)) enclose the PWWP domain. Lysine 75 is covalently cross-linked (Glycyl lysine isopeptide (Lys-Gly) (interchain with G-Cter in SUMO2)). The disordered stretch occupies residues 86-349 (NNPKVKFSSQ…VEKKRETSMD (264 aa)). Residues 92–104 (FSSQQASTKQSNA) are compositionally biased toward polar residues. Phosphoserine occurs at positions 102, 105, and 106. Over residues 113 to 135 (KETSVSKEDTDHEEKASNEDVTK) the composition is skewed to basic and acidic residues. Phosphothreonine occurs at positions 115 and 122. The residue at position 129 (serine 129) is a Phosphoserine. Threonine 141 is modified (phosphothreonine). Residues 144 to 153 (AARRGRKRKA) are compositionally biased toward basic residues. A Nuclear localization signal motif is present at residues 146–156 (RRGRKRKAEKQ). A Phosphothreonine modification is found at threonine 167. Residues serine 177 and serine 206 each carry the phosphoserine modification. Residues 213 to 261 (EEDKSKKKGQEEKQPKKQLKKDEEGQKEEDKPRKEPDKKEGKKEVESKR) are compositionally biased toward basic and acidic residues. Serine 271 carries the post-translational modification Phosphoserine. Threonine 272 carries the phosphothreonine modification. 2 positions are modified to phosphoserine: serine 273 and serine 275. Positions 274–283 (DSEEEGDDQE) are enriched in acidic residues. Over residues 287-302 (KRKGGRNFQTAHRRNM) the composition is skewed to basic residues. Basic and acidic residues predominate over residues 305-349 (GQHEKEAADRKRKQEEQMETEQQNKDEGKKPEVKKVEKKRETSMD). Coiled coils occupy residues 306 to 334 (QHEK…EGKK) and 371 to 395 (NRCI…KHTE). The segment at 340-417 (VEKKRETSMD…VSQIIMEKST (78 aa)) is integrase-binding domain (IBD). Serine 434 is modified (phosphoserine). Residue threonine 437 is modified to Phosphothreonine. Phosphoserine is present on serine 443. Over residues 446–473 (EQRQHEEANKTKDQGKKGPNKKLDKEQT) the composition is skewed to basic and acidic residues. Residues 446 to 530 (EQRQHEEANK…ISLKDSTLDN (85 aa)) are disordered. Polar residues predominate over residues 474–494 (GSKTLNGGSDAPDSNQAQHNG). Residues 498-530 (EESKDKHEASSKKKPSNEERETEISLKDSTLDN) show a composition bias toward basic and acidic residues. Citrulline is present on arginine 517. The residue at position 522 (serine 522) is a Phosphoserine. The residue at position 527 (threonine 527) is a Phosphothreonine.

This sequence belongs to the HDGF family. As to quaternary structure, monomer. Interacts with IFRD1/PC4. Interacts (via IBD domain) with POGZ (via IBM motif) and CDCA7L (via IBM motifs). Interacts (via IBD domain) with KMT2A (via IBM motifs) with a moderate affinity whereas interacts with the KMT2A-MEN1 complex with a greater affinity; MEN1 enhances interaction of KMT2A with PSIP1. Interacts (via IBD domain) with IWS1 (via IBM motif), MED1 (via IBM motif) and DBF4 (via IBM motifs). (Microbial infection) Interacts (via IBD domain) with feline immunodeficiency virus (FIV) integrase (IN), determining its nuclear localization, its tight association with chromatin and its protection from the proteasome. In terms of processing, citrullinated by PADI4.

It localises to the nucleus. Its function is as follows. Transcriptional coactivator involved in neuroepithelial stem cell differentiation and neurogenesis. Involved in particular in lens epithelial cell gene regulation and stress responses. May play an important role in lens epithelial to fiber cell terminal differentiation. May play a protective role during stress-induced apoptosis. The protein is PC4 and SFRS1-interacting protein (PSIP1) of Felis catus (Cat).